We begin with the raw amino-acid sequence, 413 residues long: BSD domain-containing protein 1-A (413 aa).

Residues 146-198 (WLAYWDPEQRKAEISELLVTSPSIRALFTKMVPAAVSHSEFWQRYFYKVHQLE) form the BSD domain. 2 stretches are compositionally biased toward basic and acidic residues: residues 208 to 219 (KQRADQSVHSEE) and 255 to 271 (HVEDKSEKTAELNRDHT). Disordered regions lie at residues 208–228 (KQRADQSVHSEEPTWEEEEED) and 255–386 (HVED…EFDM). Positions 274–287 (TSPSESSESISPIT) are enriched in low complexity. Residues 297–322 (QTPSKEPSPGTLTVTKENTGAGTDET) show a composition bias toward polar residues. A compositionally biased stretch (basic and acidic residues) spans 342–352 (QREDPPSDLRV). Residues 356 to 375 (NSDSGKSTPSNNGQKGSSTD) are compositionally biased toward polar residues. A compositionally biased stretch (acidic residues) spans 376-386 (ISEDWEKEFDM).

This Xenopus laevis (African clawed frog) protein is BSD domain-containing protein 1-A (bsdc1-a).